Reading from the N-terminus, the 312-residue chain is Malate dehydrogenase (312 aa).

NAD(+) is bound by residues 7 to 13 (GAAGGIG) and aspartate 34. Residues arginine 81 and arginine 87 each coordinate substrate. NAD(+) is bound by residues asparagine 94 and 117-119 (ITN). Substrate is bound by residues asparagine 119 and arginine 153. Histidine 177 serves as the catalytic Proton acceptor. Residue methionine 227 coordinates NAD(+).

The protein belongs to the LDH/MDH superfamily. MDH type 1 family. As to quaternary structure, homodimer.

It carries out the reaction (S)-malate + NAD(+) = oxaloacetate + NADH + H(+). Catalyzes the reversible oxidation of malate to oxaloacetate. The chain is Malate dehydrogenase from Cronobacter sakazakii (strain ATCC BAA-894) (Enterobacter sakazakii).